The primary structure comprises 411 residues: Glycerol-3-phosphate dehydrogenase [NAD(+)] (411 aa).

NAD(+) is bound by residues 71–76 (GSGNWG), F103, and F159. K182 lines the substrate pocket. Residue A215 participates in NAD(+) binding. K275 acts as the Proton acceptor in catalysis. NAD(+)-binding residues include R340 and Q369. 340–341 (RN) is a binding site for substrate.

It belongs to the NAD-dependent glycerol-3-phosphate dehydrogenase family.

The enzyme catalyses sn-glycerol 3-phosphate + NAD(+) = dihydroxyacetone phosphate + NADH + H(+). In Lachancea thermotolerans (Yeast), this protein is Glycerol-3-phosphate dehydrogenase [NAD(+)] (GPD).